The following is a 546-amino-acid chain: DDB1- and CUL4-associated factor 11 (546 aa).

Residues Met-1–Gly-19 show a composition bias toward low complexity. The segment at Met-1 to Val-40 is disordered. Phosphoserine occurs at positions 49 and 75. WD repeat units follow at residues Ser-170 to Lys-210, Asp-216 to Asp-258, Glu-263 to Gln-302, Ser-305 to Pro-345, Gly-353 to Gly-392, Gly-435 to Thr-480, and Asn-481 to Asp-520. Residues Pro-523–Gln-546 are disordered. A compositionally biased stretch (polar residues) spans Pro-536 to Gln-546.

In terms of assembly, interacts with DDB1 and CUL4A.

It functions in the pathway protein modification; protein ubiquitination. Its function is as follows. May function as a substrate receptor for CUL4-DDB1 E3 ubiquitin-protein ligase complex. This Homo sapiens (Human) protein is DDB1- and CUL4-associated factor 11 (DCAF11).